We begin with the raw amino-acid sequence, 89 residues long: Large ribosomal subunit protein bL31B (89 aa).

This sequence belongs to the bacterial ribosomal protein bL31 family. Type B subfamily. As to quaternary structure, part of the 50S ribosomal subunit.

The protein is Large ribosomal subunit protein bL31B of Corynebacterium aurimucosum (strain ATCC 700975 / DSM 44827 / CIP 107346 / CN-1) (Corynebacterium nigricans).